The sequence spans 409 residues: Probable tRNA N6-adenosine threonylcarbamoyltransferase, mitochondrial (409 aa).

The N-terminal 31 residues, 1–31 (MHALRNFAGNGIANVFGCGIRRRLSYVLGIE), are a transit peptide targeting the mitochondrion. A divalent metal cation is bound by residues His-135 and His-139. Residues 159 to 163 (LASGG), Asp-192, Gly-212, Glu-216, 322 to 323 (NN), and Ser-350 each bind substrate. A divalent metal cation is bound at residue Asp-351.

It belongs to the KAE1 / TsaD family. In terms of assembly, homodimer. A divalent metal cation is required as a cofactor.

The protein resides in the mitochondrion. It carries out the reaction L-threonylcarbamoyladenylate + adenosine(37) in tRNA = N(6)-L-threonylcarbamoyladenosine(37) in tRNA + AMP + H(+). Required for the formation of a threonylcarbamoyl group on adenosine at position 37 (t(6)A37) in mitochondrial tRNAs that read codons beginning with adenine. Probably involved in the transfer of the threonylcarbamoyl moiety of threonylcarbamoyl-AMP (TC-AMP) to the N6 group of A37. Involved in mitochondrial genome maintenance. The sequence is that of Probable tRNA N6-adenosine threonylcarbamoyltransferase, mitochondrial from Drosophila melanogaster (Fruit fly).